A 1061-amino-acid polypeptide reads, in one-letter code: Chimeric ERCC6-PGBD3 protein (1061 aa).

Positions 1–39 (MPNEGIPHSSQTQEQDCLQSQPVSNNEEMAIKQESGGDG) are disordered. Positions 8 to 27 (HSSQTQEQDCLQSQPVSNNE) are enriched in polar residues. Ser158 carries the phosphoserine modification. Lys255 participates in a covalent cross-link: Glycyl lysine isopeptide (Lys-Gly) (interchain with G-Cter in SUMO2). Disordered stretches follow at residues 287–323 (KQGC…VLSK), 344–466 (GKVG…QRLS), 494–521 (VIQP…INNL), and 537–573 (SDAE…SRRR). Over residues 353-363 (RPWESDMRPEA) the composition is skewed to basic and acidic residues. A compositionally biased stretch (acidic residues) spans 364 to 392 (EGDSEGEESEYFPTEEEEEEEDDEVEGAE). Phosphoserine occurs at positions 429 and 430. Positions 451–462 (RYRDDGDEDYYK) are enriched in basic and acidic residues. Positions 506–515 (SDEESGDEEG) are enriched in acidic residues. Phosphoserine is present on Ser554.

As to expression, expressed in heart and oocytes, but not in granulosa cells (at protein level).

Its subcellular location is the nucleus. Functionally, involved in repair of DNA damage following UV irradiation, acting either in the absence of ERCC6 or synergistically with ERCC6. Involved in the regulation of gene expression. In the absence of ERCC6, induces the expression of genes characteristic of interferon-like antiviral responses. This response is almost completely suppressed in the presence of ERCC6. In the presence of ERCC6, regulates the expression of genes involved in metabolism regulation, including IGFBP5 and IGFBP7. In vitro binds to PGBD3-related transposable elements, called MER85s; these non-autonomous 140 bp elements are characterized by the presence of PGBD3 terminal inverted repeats and the absence of internal transposase ORF. The chain is Chimeric ERCC6-PGBD3 protein from Homo sapiens (Human).